The sequence spans 230 residues: 5'-methylthioadenosine/S-adenosylhomocysteine nucleosidase (230 aa).

Glutamate 12 functions as the Proton acceptor in the catalytic mechanism. Residues glycine 78, isoleucine 153, and 174 to 175 (ME) contribute to the substrate site. Catalysis depends on aspartate 198, which acts as the Proton donor.

The protein belongs to the PNP/UDP phosphorylase family. MtnN subfamily.

It carries out the reaction S-adenosyl-L-homocysteine + H2O = S-(5-deoxy-D-ribos-5-yl)-L-homocysteine + adenine. The enzyme catalyses S-methyl-5'-thioadenosine + H2O = 5-(methylsulfanyl)-D-ribose + adenine. It catalyses the reaction 5'-deoxyadenosine + H2O = 5-deoxy-D-ribose + adenine. It participates in amino-acid biosynthesis; L-methionine biosynthesis via salvage pathway; S-methyl-5-thio-alpha-D-ribose 1-phosphate from S-methyl-5'-thioadenosine (hydrolase route): step 1/2. Functionally, catalyzes the irreversible cleavage of the glycosidic bond in both 5'-methylthioadenosine (MTA) and S-adenosylhomocysteine (SAH/AdoHcy) to adenine and the corresponding thioribose, 5'-methylthioribose and S-ribosylhomocysteine, respectively. Also cleaves 5'-deoxyadenosine, a toxic by-product of radical S-adenosylmethionine (SAM) enzymes, into 5-deoxyribose and adenine. The sequence is that of 5'-methylthioadenosine/S-adenosylhomocysteine nucleosidase from Shewanella sediminis (strain HAW-EB3).